Reading from the N-terminus, the 198-residue chain is dITP/XTP pyrophosphatase (198 aa).

Residue 7–12 (THNPHK) participates in substrate binding. Mg(2+) contacts are provided by Glu-40 and Asp-69. The active-site Proton acceptor is the Asp-69. Residues Thr-70, 151–154 (FGYD), Lys-174, and 179–180 (HR) contribute to the substrate site.

It belongs to the HAM1 NTPase family. In terms of assembly, homodimer. Requires Mg(2+) as cofactor.

It catalyses the reaction XTP + H2O = XMP + diphosphate + H(+). The enzyme catalyses dITP + H2O = dIMP + diphosphate + H(+). It carries out the reaction ITP + H2O = IMP + diphosphate + H(+). In terms of biological role, pyrophosphatase that catalyzes the hydrolysis of nucleoside triphosphates to their monophosphate derivatives, with a high preference for the non-canonical purine nucleotides XTP (xanthosine triphosphate), dITP (deoxyinosine triphosphate) and ITP. Seems to function as a house-cleaning enzyme that removes non-canonical purine nucleotides from the nucleotide pool, thus preventing their incorporation into DNA/RNA and avoiding chromosomal lesions. The sequence is that of dITP/XTP pyrophosphatase from Thermoanaerobacter pseudethanolicus (strain ATCC 33223 / 39E) (Clostridium thermohydrosulfuricum).